Reading from the N-terminus, the 291-residue chain is 4-diphosphocytidyl-2-C-methyl-D-erythritol kinase (291 aa).

Lysine 10 is an active-site residue. Residue 94 to 104 coordinates ATP; sequence PVSAGLAGGSS. Residue aspartate 136 is part of the active site.

Belongs to the GHMP kinase family. IspE subfamily.

It catalyses the reaction 4-CDP-2-C-methyl-D-erythritol + ATP = 4-CDP-2-C-methyl-D-erythritol 2-phosphate + ADP + H(+). Its pathway is isoprenoid biosynthesis; isopentenyl diphosphate biosynthesis via DXP pathway; isopentenyl diphosphate from 1-deoxy-D-xylulose 5-phosphate: step 3/6. In terms of biological role, catalyzes the phosphorylation of the position 2 hydroxy group of 4-diphosphocytidyl-2C-methyl-D-erythritol. The polypeptide is 4-diphosphocytidyl-2-C-methyl-D-erythritol kinase (Listeria welshimeri serovar 6b (strain ATCC 35897 / DSM 20650 / CCUG 15529 / CIP 8149 / NCTC 11857 / SLCC 5334 / V8)).